Here is a 1006-residue protein sequence, read N- to C-terminus: Multiple C2 domain and transmembrane region protein 9 (1006 aa).

Positions 1-108 (MSNIKLGVEV…PRSEAAPFNY (108 aa)) constitute a C2 1 domain. The interval 135–156 (VTPSVPTPVPESPQAYSPSPRK) is disordered. C2 domains lie at 251-371 (RGTE…PQWY), 411-536 (SDSS…DRWV), and 579-704 (NSSD…THAY). Positions 284, 290, 337, 339, and 344 each coordinate Ca(2+). The next 2 helical transmembrane spans lie at 842 to 862 (MLVT…AVIG) and 946 to 966 (ATAI…ITPF).

The protein belongs to the MCTP family. Requires Ca(2+) as cofactor. As to expression, expressed in incipient leaf primordia and roots meristems. Observed in flowers.

The protein localises to the cell membrane. It localises to the cytoplasm. May function as a signaling molecule by regulating the trafficking of other regulators. The chain is Multiple C2 domain and transmembrane region protein 9 from Arabidopsis thaliana (Mouse-ear cress).